A 271-amino-acid chain; its full sequence is Shikimate dehydrogenase (NADP(+)) (271 aa).

Shikimate contacts are provided by residues 14–16 (SQS) and T61. The active-site Proton acceptor is K65. Positions 86 and 101 each coordinate shikimate. Residues 125-129 (GAGGA), 148-153 (NRTHAR), and M212 each bind NADP(+). Y214 contributes to the shikimate binding site. An NADP(+)-binding site is contributed by G236.

This sequence belongs to the shikimate dehydrogenase family. Homodimer.

The enzyme catalyses shikimate + NADP(+) = 3-dehydroshikimate + NADPH + H(+). The protein operates within metabolic intermediate biosynthesis; chorismate biosynthesis; chorismate from D-erythrose 4-phosphate and phosphoenolpyruvate: step 4/7. Its function is as follows. Involved in the biosynthesis of the chorismate, which leads to the biosynthesis of aromatic amino acids. Catalyzes the reversible NADPH linked reduction of 3-dehydroshikimate (DHSA) to yield shikimate (SA). This is Shikimate dehydrogenase (NADP(+)) from Edwardsiella ictaluri (strain 93-146).